The primary structure comprises 414 residues: L-cysteine:1D-myo-inositol 2-amino-2-deoxy-alpha-D-glucopyranoside ligase (414 aa).

Cys-43 is a Zn(2+) binding site. Residues 43–46 (CGIT), Thr-58, and 81–83 (NVT) contribute to the L-cysteinyl-5'-AMP site. The 'HIGH' region motif lies at 45–55 (ITPYDATHLGH). Residues 187-192 (ERGGDP) carry the 'ERGGDP' region motif. Residue Trp-227 coordinates L-cysteinyl-5'-AMP. A Zn(2+)-binding site is contributed by Cys-231. 249 to 251 (GSD) contacts L-cysteinyl-5'-AMP. His-256 is a binding site for Zn(2+). An L-cysteinyl-5'-AMP-binding site is contributed by Ile-283. The short motif at 289–293 (KMSKS) is the 'KMSKS' region element.

This sequence belongs to the class-I aminoacyl-tRNA synthetase family. MshC subfamily. As to quaternary structure, monomer. Zn(2+) serves as cofactor.

It carries out the reaction 1D-myo-inositol 2-amino-2-deoxy-alpha-D-glucopyranoside + L-cysteine + ATP = 1D-myo-inositol 2-(L-cysteinylamino)-2-deoxy-alpha-D-glucopyranoside + AMP + diphosphate + H(+). Catalyzes the ATP-dependent condensation of GlcN-Ins and L-cysteine to form L-Cys-GlcN-Ins. The protein is L-cysteine:1D-myo-inositol 2-amino-2-deoxy-alpha-D-glucopyranoside ligase of Tsukamurella paurometabola (strain ATCC 8368 / DSM 20162 / CCUG 35730 / CIP 100753 / JCM 10117 / KCTC 9821 / NBRC 16120 / NCIMB 702349 / NCTC 13040) (Corynebacterium paurometabolum).